The primary structure comprises 252 residues: UPF0714 protein YndL (252 aa).

The helical transmembrane segment at 33–51 (IVKLLMIFMVFTPISSIYA) threads the bilayer.

This sequence belongs to the UPF0714 family.

It localises to the cell membrane. The polypeptide is UPF0714 protein YndL (yndL) (Bacillus subtilis (strain 168)).